A 171-amino-acid polypeptide reads, in one-letter code: MNKFLFFIFVFVGISFAGDDTATKDYDIVWRTINFAIFFGILFYLIKGPIKNAYNARINRISSRLEAIQTKLKESKEKKEASKKNLEDVKQKCVELIETAKKEAIQLDEKIQQSAQIDIAQMQKSFAEQKEFEIRRLKKSVTAEILDELFNEKSVNLSQNELINLVQKKVV.

The chain crosses the membrane as a helical span at residues 3-23 (KFLFFIFVFVGISFAGDDTAT).

It belongs to the ATPase B chain family. F-type ATPases have 2 components, F(1) - the catalytic core - and F(0) - the membrane proton channel. F(1) has five subunits: alpha(3), beta(3), gamma(1), delta(1), epsilon(1). F(0) has three main subunits: a(1), b(2) and c(10-14). The alpha and beta chains form an alternating ring which encloses part of the gamma chain. F(1) is attached to F(0) by a central stalk formed by the gamma and epsilon chains, while a peripheral stalk is formed by the delta and b chains.

The protein resides in the cell inner membrane. F(1)F(0) ATP synthase produces ATP from ADP in the presence of a proton or sodium gradient. F-type ATPases consist of two structural domains, F(1) containing the extramembraneous catalytic core and F(0) containing the membrane proton channel, linked together by a central stalk and a peripheral stalk. During catalysis, ATP synthesis in the catalytic domain of F(1) is coupled via a rotary mechanism of the central stalk subunits to proton translocation. Functionally, component of the F(0) channel, it forms part of the peripheral stalk, linking F(1) to F(0). This chain is ATP synthase subunit b, found in Campylobacter hominis (strain ATCC BAA-381 / DSM 21671 / CCUG 45161 / LMG 19568 / NCTC 13146 / CH001A).